The chain runs to 210 residues: Ribonuclease HII (210 aa).

The RNase H type-2 domain maps to 18-208; that stretch reads YPVAGIDEAG…VNDIISQTKL (191 aa). The a divalent metal cation site is built by D24, E25, and D116.

It belongs to the RNase HII family. Mn(2+) serves as cofactor. The cofactor is Mg(2+).

Its subcellular location is the cytoplasm. It catalyses the reaction Endonucleolytic cleavage to 5'-phosphomonoester.. Functionally, endonuclease that specifically degrades the RNA of RNA-DNA hybrids. The polypeptide is Ribonuclease HII (Endomicrobium trichonymphae).